The primary structure comprises 638 residues: Ubiquitin-associated and SH3 domain-containing protein B (638 aa).

S9 is subject to Phosphoserine. Phosphothreonine is present on T12. The region spanning 23–65 (TVKHGSALDVLLSMGFPRARAQKALASTGGRSVQAACDWLFSH) is the UBA domain. Residues 243–308 (ANHETLQVIY…PENYITKADE (66 aa)) enclose the SH3 domain. The protein tyrosine phosphatase stretch occupies residues 369-638 (GPQKRCLFVC…FNWRETLLQE (270 aa)). Residue R379 is part of the active site. H380 acts as the Tele-phosphohistidine intermediate in catalysis. Residue H565 is part of the active site.

As to quaternary structure, homodimer. Interacts with JAK2 (in vitro). Interacts with CBL. Part of a complex containing CBL and activated EGFR. Interacts with ubiquitin and with mono-ubiquitinated proteins. Interacts with ZAP70 (ubiquitinated form). As to expression, detected in splenic T-cells and B-cells, total spleen, skeletal muscle, heart, lung, kidney, thymus, brain and liver (at protein level). Highly expressed in brain. Detected in heart, spleen, lung, liver, kidney and testis.

Its subcellular location is the cytoplasm. The protein resides in the nucleus. The catalysed reaction is O-phospho-L-tyrosyl-[protein] + H2O = L-tyrosyl-[protein] + phosphate. Its function is as follows. Interferes with CBL-mediated down-regulation and degradation of receptor-type tyrosine kinases. Promotes accumulation of activated target receptors, such as T-cell receptors and EGFR, on the cell surface. Exhibits tyrosine phosphatase activity toward several substrates including EGFR, FAK, SYK, and ZAP70. Down-regulates proteins that are dually modified by both protein tyrosine phosphorylation and ubiquitination. The polypeptide is Ubiquitin-associated and SH3 domain-containing protein B (Ubash3b) (Mus musculus (Mouse)).